The sequence spans 212 residues: Guanylate kinase (212 aa).

A Guanylate kinase-like domain is found at G7 to R187. G14 to A21 contacts ATP.

This sequence belongs to the guanylate kinase family.

The protein localises to the cytoplasm. It catalyses the reaction GMP + ATP = GDP + ADP. Its function is as follows. Essential for recycling GMP and indirectly, cGMP. This Onion yellows phytoplasma (strain OY-M) protein is Guanylate kinase.